A 252-amino-acid chain; its full sequence is Large ribosomal subunit protein uL4 (252 aa).

Belongs to the universal ribosomal protein uL4 family. Part of the 50S ribosomal subunit.

Its function is as follows. One of the primary rRNA binding proteins, this protein initially binds near the 5'-end of the 23S rRNA. It is important during the early stages of 50S assembly. It makes multiple contacts with different domains of the 23S rRNA in the assembled 50S subunit and ribosome. Functionally, forms part of the polypeptide exit tunnel. This Archaeoglobus fulgidus (strain ATCC 49558 / DSM 4304 / JCM 9628 / NBRC 100126 / VC-16) protein is Large ribosomal subunit protein uL4.